The sequence spans 325 residues: Glutarate 2-hydroxylase (325 aa).

The Fe cation site is built by His160, Asp162, and His292.

This sequence belongs to the glutarate hydroxylase family. As to quaternary structure, homotetramer. The cofactor is Fe(2+).

It catalyses the reaction glutarate + 2-oxoglutarate + O2 = (S)-2-hydroxyglutarate + succinate + CO2. Its pathway is amino-acid degradation. Its function is as follows. Acts as an alpha-ketoglutarate-dependent dioxygenase catalyzing hydroxylation of glutarate (GA) to L-2-hydroxyglutarate (L2HG). Functions in a L-lysine degradation pathway that proceeds via cadaverine, glutarate and L-2-hydroxyglutarate. The polypeptide is Glutarate 2-hydroxylase (Escherichia coli (strain K12 / MC4100 / BW2952)).